A 431-amino-acid chain; its full sequence is Enolase (431 aa).

Q167 lines the (2R)-2-phosphoglycerate pocket. The active-site Proton donor is the E209. Mg(2+)-binding residues include D246, E289, and D316. Positions 341, 370, 371, and 392 each coordinate (2R)-2-phosphoglycerate. K341 (proton acceptor) is an active-site residue.

This sequence belongs to the enolase family. As to quaternary structure, component of the RNA degradosome, a multiprotein complex involved in RNA processing and mRNA degradation. The cofactor is Mg(2+).

It localises to the cytoplasm. The protein localises to the secreted. It is found in the cell surface. It carries out the reaction (2R)-2-phosphoglycerate = phosphoenolpyruvate + H2O. It participates in carbohydrate degradation; glycolysis; pyruvate from D-glyceraldehyde 3-phosphate: step 4/5. In terms of biological role, catalyzes the reversible conversion of 2-phosphoglycerate (2-PG) into phosphoenolpyruvate (PEP). It is essential for the degradation of carbohydrates via glycolysis. The polypeptide is Enolase (Shewanella halifaxensis (strain HAW-EB4)).